We begin with the raw amino-acid sequence, 159 residues long: Probable acetolactate synthase small subunit (159 aa).

Residues Thr-4–Glu-78 form the ACT domain.

It belongs to the acetolactate synthase small subunit family. Dimer of large and small chains.

The catalysed reaction is 2 pyruvate + H(+) = (2S)-2-acetolactate + CO2. It participates in amino-acid biosynthesis; L-isoleucine biosynthesis; L-isoleucine from 2-oxobutanoate: step 1/4. It functions in the pathway amino-acid biosynthesis; L-valine biosynthesis; L-valine from pyruvate: step 1/4. This is Probable acetolactate synthase small subunit (ilvH) from Archaeoglobus fulgidus (strain ATCC 49558 / DSM 4304 / JCM 9628 / NBRC 100126 / VC-16).